Reading from the N-terminus, the 211-residue chain is Arginine exporter protein ArgO (211 aa).

Transmembrane regions (helical) follow at residues Met1 to Pro21, Leu37 to Gly57, Leu68 to Leu88, Ile111 to Val131, Trp147 to Ala167, and Ala179 to Ala199.

It belongs to the LysE/ArgO transporter (TC 2.A.75) family.

It is found in the cell inner membrane. It carries out the reaction L-arginine(in) = L-arginine(out). Its function is as follows. Involved in the export of arginine. Important to control the intracellular level of arginine and the correct balance between arginine and lysine. This is Arginine exporter protein ArgO from Salmonella typhimurium (strain LT2 / SGSC1412 / ATCC 700720).